The sequence spans 618 residues: Membrane protein insertase YidC (618 aa).

Transmembrane regions (helical) follow at residues 3-23 (KNTI…SFLS), 363-383 (WGLS…IVVF), 439-459 (LPML…PSAI), 478-498 (FITF…FCLL), 520-540 (PQMA…LFVL), and 545-565 (SGLN…MIIL).

The protein belongs to the OXA1/ALB3/YidC family. Type 1 subfamily. Interacts with the Sec translocase complex via SecD. Specifically interacts with transmembrane segments of nascent integral membrane proteins during membrane integration.

It is found in the cell membrane. In terms of biological role, required for the insertion and/or proper folding and/or complex formation of integral membrane proteins into the membrane. Involved in integration of membrane proteins that insert both dependently and independently of the Sec translocase complex, as well as at least some lipoproteins. Aids folding of multispanning membrane proteins. The protein is Membrane protein insertase YidC of Bacteroides fragilis (strain YCH46).